A 607-amino-acid polypeptide reads, in one-letter code: Glutamine--fructose-6-phosphate aminotransferase [isomerizing] (607 aa).

C2 (nucleophile; for GATase activity) is an active-site residue. Residues 2–217 (CGIIGILGKR…DGDWAVLTRE (216 aa)) enclose the Glutamine amidotransferase type-2 domain. 2 SIS domains span residues 277 to 422 (TVRS…QRGF) and 455 to 597 (ICRN…VDQP). The active-site For Fru-6P isomerization activity is the K602.

As to quaternary structure, homodimer.

It localises to the cytoplasm. It carries out the reaction D-fructose 6-phosphate + L-glutamine = D-glucosamine 6-phosphate + L-glutamate. Functionally, catalyzes the first step in hexosamine metabolism, converting fructose-6P into glucosamine-6P using glutamine as a nitrogen source. The chain is Glutamine--fructose-6-phosphate aminotransferase [isomerizing] from Bartonella henselae (strain ATCC 49882 / DSM 28221 / CCUG 30454 / Houston 1) (Rochalimaea henselae).